Consider the following 266-residue polypeptide: MNQRLVYVVSDSGGETAELVVKAAASQFHASPIQVKRVPYVEDKTTLAEVVALAKMNRAIIAFTLVVPEMREFLLAEAAREGVVAYDIIGPLIEKMSHLFQLTPRYEPGQVRVLDEDYFKKIEAIEFAVKYDDGRDPRGILRADIVLIGVSRTSKTPLSQYLAHKRLKVANVPIVPEVEPPEQLFRVGPGKCFGLKISPDKLLSIRRERLKSLGLNDQAIYANMDRIKEELAYFDEVVKKIGCDVIDVTNKAVEETASIIMKKLKR.

An ADP-binding site is contributed by 149 to 156 (GVSRTSKT).

It belongs to the pyruvate, phosphate/water dikinase regulatory protein family. PDRP subfamily.

The catalysed reaction is N(tele)-phospho-L-histidyl/L-threonyl-[pyruvate, phosphate dikinase] + ADP = N(tele)-phospho-L-histidyl/O-phospho-L-threonyl-[pyruvate, phosphate dikinase] + AMP + H(+). The enzyme catalyses N(tele)-phospho-L-histidyl/O-phospho-L-threonyl-[pyruvate, phosphate dikinase] + phosphate + H(+) = N(tele)-phospho-L-histidyl/L-threonyl-[pyruvate, phosphate dikinase] + diphosphate. In terms of biological role, bifunctional serine/threonine kinase and phosphorylase involved in the regulation of the pyruvate, phosphate dikinase (PPDK) by catalyzing its phosphorylation/dephosphorylation. This chain is Putative pyruvate, phosphate dikinase regulatory protein, found in Geobacillus kaustophilus (strain HTA426).